The primary structure comprises 227 residues: Phosphoglycolate phosphatase (227 aa).

Asp-14 functions as the Nucleophile in the catalytic mechanism. Mg(2+)-binding residues include Asp-14, Asp-16, and Asp-177.

Belongs to the HAD-like hydrolase superfamily. CbbY/CbbZ/Gph/YieH family. Requires Mg(2+) as cofactor.

The enzyme catalyses 2-phosphoglycolate + H2O = glycolate + phosphate. The protein operates within organic acid metabolism; glycolate biosynthesis; glycolate from 2-phosphoglycolate: step 1/1. Its function is as follows. Specifically catalyzes the dephosphorylation of 2-phosphoglycolate. Is involved in the dissimilation of the intracellular 2-phosphoglycolate formed during the DNA repair of 3'-phosphoglycolate ends, a major class of DNA lesions induced by oxidative stress. The sequence is that of Phosphoglycolate phosphatase from Thiobacillus denitrificans (strain ATCC 25259 / T1).